The sequence spans 248 residues: MLYLHDVWVNWFEGEENGYNVCHFYEWRKDDTIELLDQVPLLKVDSTLYHYIENELLELPQKLLEDVHHKAYIRKNHERLQQEYCFVVTDGKGIIAIDTIGYNVPIRKSRLIPRQEQMVYEMVENVQAEKYEFQVEEMEKEHHILSPSPFVMNGLTRKERQLKQLLFMALDQLHTTKNTAEIRYWFTEWDPSAYGMVQHMEFEDIWAKLYDEAKAGWSEKHEQLCERLVKGQPFFEKLWEMENEQKVN.

It belongs to the UPF0736 family.

The chain is UPF0736 protein BCE33L1074 from Bacillus cereus (strain ZK / E33L).